The chain runs to 488 residues: Cysteine--tRNA ligase (488 aa).

Residue Cys-40 participates in Zn(2+) binding. The 'HIGH' region motif lies at 42–52; that stretch reads MTVYDYCHIGH. Zn(2+) contacts are provided by Cys-221, His-246, and Glu-250. Residues 278–282 carry the 'KMSKS' region motif; it reads KMSKS. An ATP-binding site is contributed by Lys-281.

Belongs to the class-I aminoacyl-tRNA synthetase family. In terms of assembly, monomer. Requires Zn(2+) as cofactor.

The protein resides in the cytoplasm. The enzyme catalyses tRNA(Cys) + L-cysteine + ATP = L-cysteinyl-tRNA(Cys) + AMP + diphosphate. This Psychrobacter cryohalolentis (strain ATCC BAA-1226 / DSM 17306 / VKM B-2378 / K5) protein is Cysteine--tRNA ligase.